Consider the following 370-residue polypeptide: A-type ATP synthase subunit C (370 aa).

Belongs to the V-ATPase V0D/AC39 subunit family. Has multiple subunits with at least A(3), B(3), C, D, E, F, H, I and proteolipid K(x).

It localises to the cell membrane. Its function is as follows. Component of the A-type ATP synthase that produces ATP from ADP in the presence of a proton gradient across the membrane. The sequence is that of A-type ATP synthase subunit C from Pyrococcus horikoshii (strain ATCC 700860 / DSM 12428 / JCM 9974 / NBRC 100139 / OT-3).